Here is a 218-residue protein sequence, read N- to C-terminus: Cytochrome b6 (218 aa).

Residues 35–55 (IFYCLGGITLVCFLIQFATGF) traverse the membrane as a helical segment. Cysteine 38 is a heme c binding site. Heme b contacts are provided by histidine 89 and histidine 103. Helical transmembrane passes span 93 to 113 (ASMM…TGGF), 119 to 139 (LTWV…VTGY), and 189 to 209 (LHTF…FLMI). Residues histidine 190 and histidine 205 each coordinate heme b.

Belongs to the cytochrome b family. PetB subfamily. The 4 large subunits of the cytochrome b6-f complex are cytochrome b6, subunit IV (17 kDa polypeptide, PetD), cytochrome f and the Rieske protein, while the 4 small subunits are PetG, PetL, PetM and PetN. The complex functions as a dimer. The cofactor is heme b. Requires heme c as cofactor.

The protein localises to the cellular thylakoid membrane. Functionally, component of the cytochrome b6-f complex, which mediates electron transfer between photosystem II (PSII) and photosystem I (PSI), cyclic electron flow around PSI, and state transitions. This chain is Cytochrome b6, found in Parasynechococcus marenigrum (strain WH8102).